The chain runs to 734 residues: Ribosomal RNA large subunit methyltransferase K/L (734 aa).

Residues His49–Leu167 enclose the THUMP domain.

It belongs to the methyltransferase superfamily. RlmKL family.

The protein resides in the cytoplasm. The enzyme catalyses guanosine(2445) in 23S rRNA + S-adenosyl-L-methionine = N(2)-methylguanosine(2445) in 23S rRNA + S-adenosyl-L-homocysteine + H(+). It carries out the reaction guanosine(2069) in 23S rRNA + S-adenosyl-L-methionine = N(2)-methylguanosine(2069) in 23S rRNA + S-adenosyl-L-homocysteine + H(+). Specifically methylates the guanine in position 2445 (m2G2445) and the guanine in position 2069 (m7G2069) of 23S rRNA. This is Ribosomal RNA large subunit methyltransferase K/L from Acinetobacter baumannii (strain SDF).